The sequence spans 766 residues: Sucrose synthase (766 aa).

Residues M220–T698 are GT-B glycosyltransferase.

Belongs to the glycosyltransferase 1 family. Plant sucrose synthase subfamily. In terms of tissue distribution, expressed most predominantly in tap root.

It carries out the reaction an NDP-alpha-D-glucose + D-fructose = a ribonucleoside 5'-diphosphate + sucrose + H(+). Functionally, sucrose-cleaving enzyme that provides UDP-glucose and fructose for various metabolic pathways. This chain is Sucrose synthase (SS1), found in Beta vulgaris (Sugar beet).